The following is a 298-amino-acid chain: Acetylglutamate kinase (298 aa).

Substrate is bound by residues 69-70 (GG), arginine 91, and asparagine 196.

This sequence belongs to the acetylglutamate kinase family. ArgB subfamily.

It localises to the cytoplasm. The enzyme catalyses N-acetyl-L-glutamate + ATP = N-acetyl-L-glutamyl 5-phosphate + ADP. The protein operates within amino-acid biosynthesis; L-arginine biosynthesis; N(2)-acetyl-L-ornithine from L-glutamate: step 2/4. Its function is as follows. Catalyzes the ATP-dependent phosphorylation of N-acetyl-L-glutamate. This is Acetylglutamate kinase from Rhodopseudomonas palustris (strain BisB18).